A 353-amino-acid chain; its full sequence is Thiamine-phosphate synthase (353 aa).

Residues 1 to 128 (MKSMPFAPIA…AASAAAIRYG (128 aa)) are unknown. The interval 129–353 (LYDLEVTVLQ…TSLQLLEALR (225 aa)) is thiamine-phosphate synthase. Residues 185 to 189 (QYRNK) and asparagine 217 contribute to the 4-amino-2-methyl-5-(diphosphooxymethyl)pyrimidine site. Mg(2+)-binding residues include aspartate 218 and aspartate 237. Serine 256 lines the 4-amino-2-methyl-5-(diphosphooxymethyl)pyrimidine pocket. 282–284 (TAT) serves as a coordination point for 2-[(2R,5Z)-2-carboxy-4-methylthiazol-5(2H)-ylidene]ethyl phosphate. Lysine 285 is a binding site for 4-amino-2-methyl-5-(diphosphooxymethyl)pyrimidine. Glycine 312 serves as a coordination point for 2-[(2R,5Z)-2-carboxy-4-methylthiazol-5(2H)-ylidene]ethyl phosphate.

The protein belongs to the thiamine-phosphate synthase family. The cofactor is Mg(2+).

The enzyme catalyses 2-[(2R,5Z)-2-carboxy-4-methylthiazol-5(2H)-ylidene]ethyl phosphate + 4-amino-2-methyl-5-(diphosphooxymethyl)pyrimidine + 2 H(+) = thiamine phosphate + CO2 + diphosphate. The catalysed reaction is 2-(2-carboxy-4-methylthiazol-5-yl)ethyl phosphate + 4-amino-2-methyl-5-(diphosphooxymethyl)pyrimidine + 2 H(+) = thiamine phosphate + CO2 + diphosphate. It carries out the reaction 4-methyl-5-(2-phosphooxyethyl)-thiazole + 4-amino-2-methyl-5-(diphosphooxymethyl)pyrimidine + H(+) = thiamine phosphate + diphosphate. It participates in cofactor biosynthesis; thiamine diphosphate biosynthesis; thiamine phosphate from 4-amino-2-methyl-5-diphosphomethylpyrimidine and 4-methyl-5-(2-phosphoethyl)-thiazole: step 1/1. Functionally, condenses 4-methyl-5-(beta-hydroxyethyl)thiazole monophosphate (THZ-P) and 2-methyl-4-amino-5-hydroxymethyl pyrimidine pyrophosphate (HMP-PP) to form thiamine monophosphate (TMP). In Prochlorococcus marinus (strain MIT 9313), this protein is Thiamine-phosphate synthase.